The chain runs to 849 residues: Rho guanine nucleotide exchange factor 15 (849 aa).

3 disordered regions span residues 1–146, 159–202, and 277–308; these read MSAQ…ASAP, GAEG…NGTP, and LPPL…LPSE. Residues 18 to 31 show a composition bias toward basic residues; sequence RIIRPRPPSRHRAP. The segment covering 48 to 59 has biased composition (polar residues); sequence QISNDASASVCT. Low complexity predominate over residues 65 to 110; sequence PPTASLKPPALLPPSVSRTSLDSQTSPDSPSSTPSPSPVSRRSISP. Serine 107 and serine 109 each carry phosphoserine. Over residues 111-123 the composition is skewed to pro residues; the sequence is EPAPCSPVPPPKP. Positions 164–180 are enriched in polar residues; the sequence is AQSSDSLERCSQGSTEV. Residue tyrosine 361 is modified to Phosphotyrosine; by EPHB2. One can recognise a DH domain in the interval 425-609; that stretch reads RMQESLFEVV…SKIIERCSAE (185 aa). 2 stretches are compositionally biased toward polar residues: residues 771–786 and 840–849; these read CSEP…QSLE and SSGTPDTPQP. Disordered regions lie at residues 771–803 and 819–849; these read CSEP…GWLK and GEHE…TPQP.

In terms of assembly, interacts with EPHA4. Interacts with EPHB2. Phosphorylated on tyrosine residues upon EFNA1 stimulation. EPHB2-dependent phosphorylation at Tyr-361 triggers UBE3A-mediated ubiquitination. In terms of processing, ubiquitinated; UBE3A-mediated ubiquitination and degradation by the proteasome promotes EFNB1-dependent synapse formation. In terms of tissue distribution, at P12, expressed is detected in the CA1 region and the dentate gyrus of the hippocampus.

It localises to the cell projection. It is found in the dendrite. In terms of biological role, specific GEF for RhoA activation. Does not activate RAC1 or CDC42. Regulates vascular smooth muscle contractility. Negatively regulates excitatory synapse development by suppressing the synapse-promoting activity of EPHB2. The protein is Rho guanine nucleotide exchange factor 15 (Arhgef15) of Mus musculus (Mouse).